Consider the following 229-residue polypeptide: NAD-dependent protein deacylase (229 aa).

The 227-residue stretch at Met-1–Met-227 folds into the Deacetylase sirtuin-type domain. An NAD(+)-binding site is contributed by Gly-9–Trp-28. Residues Tyr-53 and Arg-56 each contribute to the substrate site. NAD(+) is bound at residue Gln-86–Asp-89. Catalysis depends on His-104, which acts as the Proton acceptor. Gly-169 to Ser-171 contributes to the NAD(+) binding site.

The protein belongs to the sirtuin family. Class III subfamily.

The protein resides in the cytoplasm. It carries out the reaction N(6)-acetyl-L-lysyl-[protein] + NAD(+) + H2O = 2''-O-acetyl-ADP-D-ribose + nicotinamide + L-lysyl-[protein]. The catalysed reaction is N(6)-succinyl-L-lysyl-[protein] + NAD(+) + H2O = 2''-O-succinyl-ADP-D-ribose + nicotinamide + L-lysyl-[protein]. Functionally, NAD-dependent lysine deacetylase and desuccinylase that specifically removes acetyl and succinyl groups on target proteins. Modulates the activities of several proteins which are inactive in their acylated form. This is NAD-dependent protein deacylase from Helicobacter pylori (strain ATCC 700392 / 26695) (Campylobacter pylori).